A 338-amino-acid chain; its full sequence is Phosphate acyltransferase (338 aa).

This sequence belongs to the PlsX family. Homodimer. Probably interacts with PlsY.

It is found in the cytoplasm. The catalysed reaction is a fatty acyl-[ACP] + phosphate = an acyl phosphate + holo-[ACP]. It participates in lipid metabolism; phospholipid metabolism. Its function is as follows. Catalyzes the reversible formation of acyl-phosphate (acyl-PO(4)) from acyl-[acyl-carrier-protein] (acyl-ACP). This enzyme utilizes acyl-ACP as fatty acyl donor, but not acyl-CoA. In Endomicrobium trichonymphae, this protein is Phosphate acyltransferase.